Here is a 137-residue protein sequence, read N- to C-terminus: Putative pre-16S rRNA nuclease (137 aa).

This sequence belongs to the YqgF nuclease family.

Its subcellular location is the cytoplasm. In terms of biological role, could be a nuclease involved in processing of the 5'-end of pre-16S rRNA. The sequence is that of Putative pre-16S rRNA nuclease from Bacillus cereus (strain B4264).